We begin with the raw amino-acid sequence, 133 residues long: Sporulation-specific protein 2 (133 aa).

This sequence belongs to the VPS13 family. In terms of assembly, interacts with spo13 and spo15.

The protein localises to the cytoplasm. It is found in the cytoskeleton. Its subcellular location is the microtubule organizing center. The protein resides in the spindle pole body. Its function is as follows. Involved in sporulation. Plays a significant role in modification of the spindle pole body prior to spore formation and is required for initiating forespore membrane formation. Assists in the localization of spo13 to the outer surface of the SPB. The chain is Sporulation-specific protein 2 (spo2) from Schizosaccharomyces pombe (strain 972 / ATCC 24843) (Fission yeast).